The following is a 61-amino-acid chain: uncharacterized protein (61 aa).

This is an uncharacterized protein from Bacillus subtilis (strain 168).